The sequence spans 776 residues: MSFASNATGFRIPLTTCVYPSPILRFNAKVGSGSSYGTTEAQRNMKCVDGIGRSRVVAVAASGRTRDSNPEVESEKMKEMIRWMFRDMDDGEVSVSAYDTAWVALVEDIGGSGGPQFPTSLDWISDNQLDDGSWGDRKFVLYDRILNTLACVVALTTWKLHPHKCEKGLKFIRENIEKLDNEDEELMLVGFEVALPSLIDLAKKLGIEISDDSPCIKNIYAKRDSKLKEIPMDLLHKEPTSLLFSLEGMEGLDWEKLLTLRSEGSFLSSPSSTAYALQHTKDELCLDYLLKPVNKFNGGVPSTYPVDMFEHLWAVDRLQRLGISRYFQVEIGECLDYTFRYWTNEGISWARYTNIKDSDDTSMGFRLLRLHGYDISIDAFKAFEKGGEFWCMAGQMGHAVTGVYNLYRASQLMFPQEHILLDARNFSANFLHHKRLTNAIVDKWIISKDLPAEVGYALDVPFYASLPRLEARFFLEQYGGDDDVWIGKTLYRMLYVNSNTYLELAKLDYKHCQSVHQLEWKSMQKWYTDCNLGEFGLSEISLLLAYYIAASTAFEPEKSGERLPWATTIILVETIASQQLSNEQKREFVNEFENGSTINNRNGGRYKPRSRLVDVLINAITLVAQGRGISQQLSNAWQKWLKTWEGGGHQGEAEARLLIHTLHLSSGLDESSFSHPKYQQLLEVTSKVCHQLRLFQNRKVYDAQGCTSRLVTGTTFQTEAGMQELVKLVFPKTSDDMTSATKQSFFNIARSFYYTAYCHEGAIDSHIDKVLFEKIV.

A chloroplast-targeting transit peptide spans 1 to 60; it reads MSFASNATGFRIPLTTCVYPSPILRFNAKVGSGSSYGTTEAQRNMKCVDGIGRSRVVAVA. Lysine 226 provides a ligand contact to substrate. Residues aspartate 357 and aspartate 359 each coordinate Mg(2+). The DXDD motif signature appears at 357–360; that stretch reads DSDD. Position 443 (lysine 443) interacts with substrate.

The protein belongs to the terpene synthase family. Mg(2+) serves as cofactor.

It localises to the plastid. It is found in the chloroplast. It catalyses the reaction ent-8alpha-hydroxylabd-13-en-15-yl diphosphate = (2E,6E,10E)-geranylgeranyl diphosphate + H2O. It participates in secondary metabolite biosynthesis; terpenoid biosynthesis. In terms of biological role, involved in diterpenoid biosynthesis. Catalyzes the conversion of all-trans-geranylgeranyl diphosphate to ent-8alpha-hydroxylabd-13-en-15-yl diphosphate. The chain is Ent-8-alpha-hydroxylabd-13-en-15-yl diphosphate synthase CPS4, chloroplastic from Salvia miltiorrhiza (Chinese sage).